A 621-amino-acid polypeptide reads, in one-letter code: Chaperone protein HscA homolog (621 aa).

It belongs to the heat shock protein 70 family.

Its function is as follows. Chaperone involved in the maturation of iron-sulfur cluster-containing proteins. Has a low intrinsic ATPase activity which is markedly stimulated by HscB. The sequence is that of Chaperone protein HscA homolog from Polynucleobacter asymbioticus (strain DSM 18221 / CIP 109841 / QLW-P1DMWA-1) (Polynucleobacter necessarius subsp. asymbioticus).